Here is a 284-residue protein sequence, read N- to C-terminus: RNase adapter protein RapZ (284 aa).

8 to 15 (GRSGSGKS) contacts ATP. 56 to 59 (DVRN) provides a ligand contact to GTP. The tract at residues 266-284 (RSRGKNVQSRHRTLEKRKS) is RNA-binding.

This sequence belongs to the RapZ-like family. RapZ subfamily. Homotrimer.

Its function is as follows. Modulates the synthesis of GlmS, by affecting the processing and stability of the regulatory small RNA GlmZ. When glucosamine-6-phosphate (GlcN6P) concentrations are high in the cell, RapZ binds GlmZ and targets it to cleavage by RNase E. Consequently, GlmZ is inactivated and unable to activate GlmS synthesis. Under low GlcN6P concentrations, RapZ is sequestered and inactivated by an other regulatory small RNA, GlmY, preventing GlmZ degradation and leading to synthesis of GlmS. The protein is RNase adapter protein RapZ of Klebsiella oxytoca.